The sequence spans 261 residues: Epidermal growth factor-binding protein type B (261 aa).

The signal sequence occupies residues 1 to 16 (MWFLILFLALSLGGID). Residues 17–24 (AAPPLQSR) constitute a propeptide, activation peptide. One can recognise a Peptidase S1 domain in the interval 25–258 (VVGGFNCKKN…FNSWIKDTMM (234 aa)). 5 disulfides stabilise this stretch: Cys-31-Cys-173, Cys-50-Cys-66, Cys-152-Cys-219, Cys-184-Cys-198, and Cys-209-Cys-234. Residue His-65 is the Charge relay system of the active site. The N-linked (GlcNAc...) asparagine glycan is linked to Asn-102. Residue Asp-120 is the Charge relay system of the active site. Ser-213 acts as the Charge relay system in catalysis.

Belongs to the peptidase S1 family. Kallikrein subfamily.

The catalysed reaction is Hydrolyzes mouse Ren2 protein (a species of prorenin present in the submandibular gland) on the carboxy side of the arginine residue at the Lys-Arg-|- pair in the N-terminus, to yield mature renin.. Its function is as follows. Cleaves REN2 at a dibasic site to yield mature renin. The chain is Epidermal growth factor-binding protein type B (Egfbp2) from Mus musculus (Mouse).